Here is a 229-residue protein sequence, read N- to C-terminus: Prolactin (229 aa).

The signal sequence occupies residues 1–30 (MDNKGWSLKGSLLPLLLLVSDLLLCQGVTS). The cysteines at positions 34 and 41 are disulfide-linked. A phosphoserine mark is found at Ser-56, Ser-64, and Ser-120. 2 cysteine pairs are disulfide-bonded: Cys-88–Cys-204 and Cys-221–Cys-229.

This sequence belongs to the somatotropin/prolactin family. As to quaternary structure, interacts with PRLR.

The protein resides in the secreted. Its function is as follows. Prolactin acts primarily on the mammary gland by promoting lactation. This is Prolactin (PRL) from Neovison vison (American mink).